Reading from the N-terminus, the 285-residue chain is uncharacterized protein (285 aa).

The 179-residue stretch at 107–285 (FLTVDTTIFD…KHHLKRQMIP (179 aa)) folds into the ATP-grasp domain.

This is an uncharacterized protein from Mycoplasma pneumoniae (strain ATCC 29342 / M129 / Subtype 1) (Mycoplasmoides pneumoniae).